The sequence spans 180 residues: NAD(P)H-quinone oxidoreductase subunit I, chloroplastic (180 aa).

4Fe-4S ferredoxin-type domains follow at residues 55 to 84 (GRIH…VNWR) and 95 to 124 (LNYS…MTEE). [4Fe-4S] cluster is bound by residues cysteine 64, cysteine 67, cysteine 70, cysteine 74, cysteine 104, cysteine 107, cysteine 110, and cysteine 114.

This sequence belongs to the complex I 23 kDa subunit family. NDH is composed of at least 16 different subunits, 5 of which are encoded in the nucleus. It depends on [4Fe-4S] cluster as a cofactor.

Its subcellular location is the plastid. The protein resides in the chloroplast thylakoid membrane. The catalysed reaction is a plastoquinone + NADH + (n+1) H(+)(in) = a plastoquinol + NAD(+) + n H(+)(out). The enzyme catalyses a plastoquinone + NADPH + (n+1) H(+)(in) = a plastoquinol + NADP(+) + n H(+)(out). Its function is as follows. NDH shuttles electrons from NAD(P)H:plastoquinone, via FMN and iron-sulfur (Fe-S) centers, to quinones in the photosynthetic chain and possibly in a chloroplast respiratory chain. The immediate electron acceptor for the enzyme in this species is believed to be plastoquinone. Couples the redox reaction to proton translocation, and thus conserves the redox energy in a proton gradient. In Platanus occidentalis (Sycamore), this protein is NAD(P)H-quinone oxidoreductase subunit I, chloroplastic.